We begin with the raw amino-acid sequence, 243 residues long: UPF0246 protein Sez_1855 (243 aa).

Belongs to the UPF0246 family.

The polypeptide is UPF0246 protein Sez_1855 (Streptococcus equi subsp. zooepidemicus (strain MGCS10565)).